The primary structure comprises 363 residues: Pyrimidine monooxygenase RutA (363 aa).

FMN is bound by residues isoleucine 49 to lysine 50, asparagine 115, glutamate 124, arginine 140 to tyrosine 141, and serine 190.

The protein belongs to the NtaA/SnaA/DszA monooxygenase family. RutA subfamily.

It carries out the reaction uracil + FMNH2 + NADH + O2 = (Z)-3-ureidoacrylate + FMN + NAD(+) + H2O + H(+). The enzyme catalyses thymine + FMNH2 + NADH + O2 = (Z)-2-methylureidoacrylate + FMN + NAD(+) + H2O + H(+). In terms of biological role, catalyzes the pyrimidine ring opening between N-3 and C-4 by an unusual flavin hydroperoxide-catalyzed mechanism, adding oxygen atoms in the process to yield ureidoacrylate peracid, that immediately reacts with FMN forming ureidoacrylate and FMN-N(5)-oxide. The FMN-N(5)-oxide reacts spontaneously with NADH to produce FMN. Requires the flavin reductase RutF to regenerate FMN in vivo. This Escherichia coli O127:H6 (strain E2348/69 / EPEC) protein is Pyrimidine monooxygenase RutA.